Consider the following 377-residue polypeptide: Flagellin C (377 aa).

Coiled-coil stretches lie at residues 103-129 (SNSK…IAET) and 301-340 (VDSH…KDTD).

This sequence belongs to the bacterial flagellin family. As to quaternary structure, heteromer of multiple flagellin subunits including FlaA, FlaB, FlaC, FlaD and possibly FlaE.

The protein resides in the secreted. It is found in the bacterial flagellum. Its function is as follows. Flagellin is the subunit protein which polymerizes to form the filaments of bacterial flagella. FlaC is not essential for flagellar synthesis and motility. This is Flagellin C (flaC) from Vibrio anguillarum (Listonella anguillarum).